A 959-amino-acid polypeptide reads, in one-letter code: Glycine dehydrogenase (decarboxylating) (959 aa).

Lys707 carries the post-translational modification N6-(pyridoxal phosphate)lysine.

This sequence belongs to the GcvP family. As to quaternary structure, the glycine cleavage system is composed of four proteins: P, T, L and H. Pyridoxal 5'-phosphate is required as a cofactor.

It carries out the reaction N(6)-[(R)-lipoyl]-L-lysyl-[glycine-cleavage complex H protein] + glycine + H(+) = N(6)-[(R)-S(8)-aminomethyldihydrolipoyl]-L-lysyl-[glycine-cleavage complex H protein] + CO2. The glycine cleavage system catalyzes the degradation of glycine. The P protein binds the alpha-amino group of glycine through its pyridoxal phosphate cofactor; CO(2) is released and the remaining methylamine moiety is then transferred to the lipoamide cofactor of the H protein. The chain is Glycine dehydrogenase (decarboxylating) from Photobacterium profundum (strain SS9).